A 157-amino-acid polypeptide reads, in one-letter code: Class 10 plant pathogenesis-related protein 2E (157 aa).

Asp8 provides a ligand contact to trans-zeatin. Residues Pro32, Val35, and Ile38 each coordinate Ca(2+). Glu60, His69, Tyr81, and Tyr83 together coordinate trans-zeatin.

It belongs to the BetVI family.

The protein resides in the cytoplasm. The protein localises to the cytosol. Functionally, class II ribonuclease (RNase). Binds to cytokinins. Interacts with melatonin. This Lupinus luteus (European yellow lupine) protein is Class 10 plant pathogenesis-related protein 2E.